We begin with the raw amino-acid sequence, 490 residues long: Homoserine O-acetyltransferase (490 aa).

In terms of domain architecture, AB hydrolase-1 spans N48–L354. The Nucleophile role is filled by S153. R223 contributes to the substrate binding site. Catalysis depends on residues D317 and H350. Position 351 (D351) interacts with substrate. 2 consecutive CBS domains span residues M377 to I434 and M438 to K490.

This sequence belongs to the AB hydrolase superfamily. MetX family. Homodimer.

Its subcellular location is the cytoplasm. It catalyses the reaction L-homoserine + acetyl-CoA = O-acetyl-L-homoserine + CoA. The protein operates within amino-acid biosynthesis; L-methionine biosynthesis via de novo pathway; O-acetyl-L-homoserine from L-homoserine: step 1/1. Transfers an acetyl group from acetyl-CoA to L-homoserine, forming acetyl-L-homoserine. This Methanosphaera stadtmanae (strain ATCC 43021 / DSM 3091 / JCM 11832 / MCB-3) protein is Homoserine O-acetyltransferase.